The primary structure comprises 480 residues: Acetyl-coenzyme A carboxylase carboxyl transferase subunit beta, chloroplastic (480 aa).

The disordered stretch occupies residues 25–48 (TSSLGPIENASESKDPNINDTDKN). A compositionally biased stretch (basic and acidic residues) spans 35-47 (SESKDPNINDTDK). One can recognise a CoA carboxyltransferase N-terminal domain in the interval 216–480 (LWVQCENCYG…LHTFFPLNQN (265 aa)). Residues Cys220, Cys223, Cys239, and Cys242 each coordinate Zn(2+). Residues 220-242 (CENCYGLNYKKFFKSKMNLCEQC) form a C4-type zinc finger.

Belongs to the AccD/PCCB family. Acetyl-CoA carboxylase is a heterohexamer composed of biotin carboxyl carrier protein, biotin carboxylase and 2 subunits each of ACCase subunit alpha and ACCase plastid-coded subunit beta (accD). Requires Zn(2+) as cofactor.

Its subcellular location is the plastid. The protein localises to the chloroplast stroma. It catalyses the reaction N(6)-carboxybiotinyl-L-lysyl-[protein] + acetyl-CoA = N(6)-biotinyl-L-lysyl-[protein] + malonyl-CoA. It participates in lipid metabolism; malonyl-CoA biosynthesis; malonyl-CoA from acetyl-CoA: step 1/1. Component of the acetyl coenzyme A carboxylase (ACC) complex. Biotin carboxylase (BC) catalyzes the carboxylation of biotin on its carrier protein (BCCP) and then the CO(2) group is transferred by the transcarboxylase to acetyl-CoA to form malonyl-CoA. The protein is Acetyl-coenzyme A carboxylase carboxyl transferase subunit beta, chloroplastic of Helianthus annuus (Common sunflower).